The primary structure comprises 151 residues: Ribosome maturation factor RimP (151 aa).

The protein belongs to the RimP family.

Its subcellular location is the cytoplasm. In terms of biological role, required for maturation of 30S ribosomal subunits. This is Ribosome maturation factor RimP from Pasteurella multocida (strain Pm70).